The sequence spans 121 residues: UPF0738 protein BPUM_1088 (121 aa).

This sequence belongs to the UPF0738 family.

The polypeptide is UPF0738 protein BPUM_1088 (Bacillus pumilus (strain SAFR-032)).